The primary structure comprises 429 residues: Glutamate-1-semialdehyde 2,1-aminomutase (429 aa).

K265 is modified (N6-(pyridoxal phosphate)lysine).

Belongs to the class-III pyridoxal-phosphate-dependent aminotransferase family. HemL subfamily. Homodimer. The cofactor is pyridoxal 5'-phosphate.

It is found in the cytoplasm. It catalyses the reaction (S)-4-amino-5-oxopentanoate = 5-aminolevulinate. It functions in the pathway porphyrin-containing compound metabolism; protoporphyrin-IX biosynthesis; 5-aminolevulinate from L-glutamyl-tRNA(Glu): step 2/2. The chain is Glutamate-1-semialdehyde 2,1-aminomutase from Legionella pneumophila (strain Lens).